Reading from the N-terminus, the 357-residue chain is Phosphoribosylformylglycinamidine cyclo-ligase (357 aa).

It belongs to the AIR synthase family.

The protein localises to the cytoplasm. It catalyses the reaction 2-formamido-N(1)-(5-O-phospho-beta-D-ribosyl)acetamidine + ATP = 5-amino-1-(5-phospho-beta-D-ribosyl)imidazole + ADP + phosphate + H(+). The protein operates within purine metabolism; IMP biosynthesis via de novo pathway; 5-amino-1-(5-phospho-D-ribosyl)imidazole from N(2)-formyl-N(1)-(5-phospho-D-ribosyl)glycinamide: step 2/2. The protein is Phosphoribosylformylglycinamidine cyclo-ligase of Rhizobium leguminosarum bv. trifolii (strain WSM2304).